The sequence spans 304 residues: L-xylo-3-hexulose reductase (304 aa).

Residues isoleucine 19, aspartate 68, and asparagine 107 each coordinate NADP(+). Catalysis depends on proton donor residues serine 163 and serine 164. NADP(+) is bound by residues tyrosine 177, lysine 181, and alanine 209. Catalysis depends on tyrosine 177, which acts as the Proton acceptor. The active-site Lowers pKa of active site Tyr is the lysine 181.

It belongs to the short-chain dehydrogenases/reductases (SDR) family.

The catalysed reaction is D-sorbitol + NADP(+) = L-xylo-3-hexulose + NADPH + H(+). It functions in the pathway carbohydrate degradation. Functionally, L-xylulose reductase involved in the catabolism of D-galactose through an oxidoreductive pathway. Catalyzes the NADPH-dependent reduction of L-xylo-3-hexulose. Is also active with D-ribulose and L-xylulose, and to a lesser extent with D-xylulose, D-fructose and L- and D-sorbose. In the reverse reaction, shows activity with D-sorbitol and D-mannitol, low activity with xylitol, but no activity with galactitol, ribitol, and L- and D-arabitol. This Hypocrea jecorina (strain QM6a) (Trichoderma reesei) protein is L-xylo-3-hexulose reductase.